The chain runs to 127 residues: Ribosome-binding factor A (127 aa).

It belongs to the RbfA family. Monomer. Binds 30S ribosomal subunits, but not 50S ribosomal subunits or 70S ribosomes.

The protein resides in the cytoplasm. Functionally, one of several proteins that assist in the late maturation steps of the functional core of the 30S ribosomal subunit. Associates with free 30S ribosomal subunits (but not with 30S subunits that are part of 70S ribosomes or polysomes). Required for efficient processing of 16S rRNA. May interact with the 5'-terminal helix region of 16S rRNA. The chain is Ribosome-binding factor A from Chloroflexus aggregans (strain MD-66 / DSM 9485).